Reading from the N-terminus, the 358-residue chain is MPLVANSDLPAFERLREEGETVIPRDVALHQDIREMHIGLLNMMPDAALAATERQFFRLIGESNQIAQFYIHPFTLKEIQRSLEANHYVERYYQTFEQIQAEGLDALIITGANVTQPQLSLEPFWKPLIKVISWAYENVTSTLCSCLATHAVLDFRYGQKRRRLSSKRWGVYSHRVVNRSHPLVRGVNTRFDVPHSRFNEISRDQFEAAGLHVLAESEKGGAHLAVSEDLFRIVFCQGHPEYDSISLLKEYKREILRFASGQRDNYPPFPENYFSPKIQAILEEYQEQIIIARDKDLPLPQLPEPLIVDYLDNTWHDTAEAIINNWMGNVYQITHSDRKRPFMEDIAPDDPLGLRRPT.

The active-site Acyl-thioester intermediate is the Cys146. Lys167 and Ser196 together coordinate substrate. His239 (proton acceptor) is an active-site residue. The active site involves Glu241. Residue Arg253 coordinates substrate.

The protein belongs to the MetA family.

It localises to the cytoplasm. The catalysed reaction is L-homoserine + succinyl-CoA = O-succinyl-L-homoserine + CoA. It participates in amino-acid biosynthesis; L-methionine biosynthesis via de novo pathway; O-succinyl-L-homoserine from L-homoserine: step 1/1. In terms of biological role, transfers a succinyl group from succinyl-CoA to L-homoserine, forming succinyl-L-homoserine. The polypeptide is Homoserine O-succinyltransferase (Nitrosococcus oceani (strain ATCC 19707 / BCRC 17464 / JCM 30415 / NCIMB 11848 / C-107)).